An 86-amino-acid polypeptide reads, in one-letter code: Small ribosomal subunit protein bS20 (86 aa).

The span at 1–11 (MANIKSQIKRN) shows a compositional bias: polar residues. Residues 1–20 (MANIKSQIKRNLTNEKRHQA) are disordered.

Belongs to the bacterial ribosomal protein bS20 family.

Functionally, binds directly to 16S ribosomal RNA. This Acholeplasma laidlawii (strain PG-8A) protein is Small ribosomal subunit protein bS20.